A 273-amino-acid chain; its full sequence is Hydroxyethylthiazole kinase (273 aa).

Residue Met-47 coordinates substrate. Positions 123 and 169 each coordinate ATP. Gly-196 lines the substrate pocket.

Belongs to the Thz kinase family. Mg(2+) is required as a cofactor.

It carries out the reaction 5-(2-hydroxyethyl)-4-methylthiazole + ATP = 4-methyl-5-(2-phosphooxyethyl)-thiazole + ADP + H(+). It participates in cofactor biosynthesis; thiamine diphosphate biosynthesis; 4-methyl-5-(2-phosphoethyl)-thiazole from 5-(2-hydroxyethyl)-4-methylthiazole: step 1/1. Its function is as follows. Catalyzes the phosphorylation of the hydroxyl group of 4-methyl-5-beta-hydroxyethylthiazole (THZ). The sequence is that of Hydroxyethylthiazole kinase from Desulfotalea psychrophila (strain LSv54 / DSM 12343).